The sequence spans 366 residues: Spermidine/putrescine import ATP-binding protein PotA (366 aa).

In terms of domain architecture, ABC transporter spans 8 to 239; the sequence is IRFENVTKQF…PINKFVADFI (232 aa). 41 to 48 lines the ATP pocket; the sequence is GPSGCGKT.

This sequence belongs to the ABC transporter superfamily. Spermidine/putrescine importer (TC 3.A.1.11.1) family. In terms of assembly, the complex is composed of two ATP-binding proteins (PotA), two transmembrane proteins (PotB and PotC) and a solute-binding protein (PotD).

It localises to the cell membrane. The enzyme catalyses ATP + H2O + polyamine-[polyamine-binding protein]Side 1 = ADP + phosphate + polyamineSide 2 + [polyamine-binding protein]Side 1.. In terms of biological role, part of the ABC transporter complex PotABCD involved in spermidine/putrescine import. Responsible for energy coupling to the transport system. In Listeria innocua serovar 6a (strain ATCC BAA-680 / CLIP 11262), this protein is Spermidine/putrescine import ATP-binding protein PotA.